Consider the following 322-residue polypeptide: Ribosomal RNA small subunit methyltransferase H (322 aa).

Residues 40–42 (GGH), Asp-60, Phe-84, Asp-106, and Gln-113 contribute to the S-adenosyl-L-methionine site.

This sequence belongs to the methyltransferase superfamily. RsmH family.

It is found in the cytoplasm. The catalysed reaction is cytidine(1402) in 16S rRNA + S-adenosyl-L-methionine = N(4)-methylcytidine(1402) in 16S rRNA + S-adenosyl-L-homocysteine + H(+). In terms of biological role, specifically methylates the N4 position of cytidine in position 1402 (C1402) of 16S rRNA. This is Ribosomal RNA small subunit methyltransferase H from Aggregatibacter aphrophilus (strain NJ8700) (Haemophilus aphrophilus).